The primary structure comprises 384 residues: Guanine nucleotide-binding protein alpha-2 subunit (384 aa).

The segment at 1 to 23 (MGLVCSRNRRYRDSDPEENAQAA) is disordered. Glycine 2 carries N-myristoyl glycine lipidation. Cysteine 5 carries S-palmitoyl cysteine lipidation. Residues 38 to 384 (HIQKLLLLGA…RRNLFEAGLL (347 aa)) form the G-alpha domain. The tract at residues 41–54 (KLLLLGAGESGKST) is G1 motif. Positions 49, 50, 51, 52, 53, 54, 163, 188, 189, 194, 222, 288, 289, 291, and 356 each coordinate GTP. A Mg(2+)-binding site is contributed by serine 53. The G2 motif stretch occupies residues 186-194 (DVLYARVRT). Residue threonine 194 coordinates Mg(2+). The segment at 215–224 (YRLFDVGGQR) is G3 motif. A G4 motif region spans residues 284–291 (MLFLNKFD). Positions 354-359 (TTALDQ) are G5 motif.

It belongs to the G-alpha family. As to quaternary structure, g proteins are composed of 3 units; alpha, beta and gamma. The alpha chain contains the guanine nucleotide binding site. The cofactor is Mg(2+).

Guanine nucleotide-binding proteins (G proteins) are involved as modulators or transducers in various transmembrane signaling systems. The sequence is that of Guanine nucleotide-binding protein alpha-2 subunit (GPA2) from Pisum sativum (Garden pea).